Consider the following 328-residue polypeptide: UPF0324 membrane protein AF_1621 (328 aa).

11 consecutive transmembrane segments (helical) span residues 21–39, 43–60, 73–95, 101–123, 130–152, 162–184, 191–213, 223–240, 245–267, 271–293, and 305–327; these read LQML…IINL, ALEP…AGNL, YVPF…PYLG, IVAA…SSRL, SILL…SPLI, AIMI…AHYA, FAVL…QLFG, GIRI…SIIY, FYVP…YLPG, QALR…YTVN, and LFAS…GSGA.

This sequence belongs to the UPF0324 family.

The protein localises to the cell membrane. The chain is UPF0324 membrane protein AF_1621 from Archaeoglobus fulgidus (strain ATCC 49558 / DSM 4304 / JCM 9628 / NBRC 100126 / VC-16).